We begin with the raw amino-acid sequence, 415 residues long: Fructose-like permease IIC component (415 aa).

Over 1–46 (MAIKKRSATVVPGASGAAAAVKNLQASKSSFWGELPQHVMSGISRM) the chain is Cytoplasmic. The region spanning 35 to 415 (LPQHVMSGIS…RKGKLLIDSL (381 aa)) is the PTS EIIC type-2 domain. Residues 47 to 67 (VPTLIMGGVILAFSQLIAYSW) form a helical membrane-spanning segment. Residues 68-101 (LKIPAEIGIMDALNSGKFSGFDLSLLKFAWLSQS) are Periplasmic-facing. A helical membrane pass occupies residues 102–122 (FGGVLFGFAIPMFAAFVANSI). Over 123–126 (GGKL) the chain is Cytoplasmic. The helical transmembrane segment at 127–147 (AFPAGFIGGLMSTQPTQLLNF) threads the bilayer. Over 148 to 157 (DPSTMQWATS) the chain is Periplasmic. A helical transmembrane segment spans residues 158-178 (SPVPSTFIGALIISIVAGYLV). Over 179-197 (KWMNQKIQLPDFLLAFKTT) the chain is Cytoplasmic. A helical transmembrane segment spans residues 198 to 218 (FLLPILSAIFVMLAMYYVITP). At 219-237 (FGGWINGGIRTVLTAAGEK) the chain is on the periplasmic side. The chain crosses the membrane as a helical span at residues 238 to 258 (GALMYAMGIAAATAIDLGGPI). At 259–276 (NKAAGFVAFSFTTDHVLP) the chain is on the cytoplasmic side. A helical membrane pass occupies residues 277–297 (VTARSIAIVIPPIGLGLATII). At 298–318 (DRRLTGKRLFNAQLYPQGKTA) the chain is on the periplasmic side. The helical transmembrane segment at 319 to 339 (MFLAFMGISEGAIPFALESPI) threads the bilayer. Residues 340–341 (TA) lie on the Cytoplasmic side of the membrane. A helical membrane pass occupies residues 342–362 (IPSYMVGAIVGSTAAVWLGAV). At 363 to 378 (QWFPESAIWAWPLVTN) the chain is on the periplasmic side. The chain crosses the membrane as a helical span at residues 379-399 (LGVYMAGIALGAIITALMVVF). The Cytoplasmic segment spans residues 400–415 (LRLMMFRKGKLLIDSL).

The protein resides in the cell inner membrane. Functionally, the phosphoenolpyruvate-dependent sugar phosphotransferase system (PTS), a major carbohydrate active -transport system, catalyzes the phosphorylation of incoming sugar substrates concomitant with their translocation across the cell membrane. This Shigella flexneri protein is Fructose-like permease IIC component (fryC).